We begin with the raw amino-acid sequence, 194 residues long: Outer surface 22 kDa lipoprotein (194 aa).

Residues 1 to 21 (MYKNGFFKNYLSLLLIFLVIA) form the signal peptide. Cys-22 carries the N-palmitoyl cysteine lipid modification. Residue Cys-22 is the site of S-diacylglycerol cysteine attachment.

The protein resides in the cell outer membrane. The polypeptide is Outer surface 22 kDa lipoprotein (p22) (Borreliella burgdorferi (strain N40) (Borrelia burgdorferi)).